The sequence spans 720 residues: Catalase-peroxidase (720 aa).

The signal sequence occupies residues M1–A21. The segment at residues W94–Y222 is a cross-link (tryptophyl-tyrosyl-methioninium (Trp-Tyr) (with M-248)). H95 functions as the Proton acceptor in the catalytic mechanism. The segment at residues Y222 to M248 is a cross-link (tryptophyl-tyrosyl-methioninium (Tyr-Met) (with W-94)). H263 contacts heme b.

It belongs to the peroxidase family. Peroxidase/catalase subfamily. As to quaternary structure, homodimer or homotetramer. Requires heme b as cofactor. Formation of the three residue Trp-Tyr-Met cross-link is important for the catalase, but not the peroxidase activity of the enzyme.

The enzyme catalyses H2O2 + AH2 = A + 2 H2O. The catalysed reaction is 2 H2O2 = O2 + 2 H2O. Functionally, bifunctional enzyme with both catalase and broad-spectrum peroxidase activity. The protein is Catalase-peroxidase of Shewanella denitrificans (strain OS217 / ATCC BAA-1090 / DSM 15013).